Consider the following 477-residue polypeptide: Glycogen synthase (477 aa).

Residue Lys-15 coordinates ADP-alpha-D-glucose.

It belongs to the glycosyltransferase 1 family. Bacterial/plant glycogen synthase subfamily.

It catalyses the reaction [(1-&gt;4)-alpha-D-glucosyl](n) + ADP-alpha-D-glucose = [(1-&gt;4)-alpha-D-glucosyl](n+1) + ADP + H(+). Its pathway is glycan biosynthesis; glycogen biosynthesis. In terms of biological role, synthesizes alpha-1,4-glucan chains using ADP-glucose. The chain is Glycogen synthase from Shigella dysenteriae serotype 1 (strain Sd197).